The chain runs to 155 residues: Probable adenylyl-sulfate kinase (155 aa).

Residue glycine 9–threonine 16 participates in ATP binding. The Phosphoserine intermediate role is filled by serine 83. The segment at leucine 134–arginine 155 is disordered.

It belongs to the APS kinase family.

It catalyses the reaction adenosine 5'-phosphosulfate + ATP = 3'-phosphoadenylyl sulfate + ADP + H(+). Its pathway is sulfur metabolism; hydrogen sulfide biosynthesis; sulfite from sulfate: step 2/3. Functionally, catalyzes the synthesis of activated sulfate. The polypeptide is Probable adenylyl-sulfate kinase (cysC) (Archaeoglobus fulgidus (strain ATCC 49558 / DSM 4304 / JCM 9628 / NBRC 100126 / VC-16)).